Consider the following 163-residue polypeptide: Transcriptional repressor NrdR (163 aa).

The segment at Cys3–Cys34 is a zinc-finger region. Residues Leu49–Glu139 form the ATP-cone domain.

Belongs to the NrdR family. Zn(2+) is required as a cofactor.

Its function is as follows. Negatively regulates transcription of bacterial ribonucleotide reductase nrd genes and operons by binding to NrdR-boxes. In Streptococcus mutans serotype c (strain ATCC 700610 / UA159), this protein is Transcriptional repressor NrdR.